The sequence spans 574 residues: Putative diflavin flavoprotein A 3 (574 aa).

The segment at 43-236 is zinc metallo-hydrolase; it reads QNGTTYNSFL…PSVKMIATGH (194 aa). 6 residues coordinate Fe cation: H92, E94, D96, H159, D178, and H236. Residues 265-409 enclose the Flavodoxin-like domain; that stretch reads IGVFYVSEYG…DLGQWVTRDR (145 aa). Residues 410-574 are flavodoxin-reductase-like; the sequence is SIKAMKSLGA…VHHRKVGNHY (165 aa).

The protein in the N-terminal section; belongs to the zinc metallo-hydrolase group 3 family. This sequence in the C-terminal section; belongs to the flavodoxin reductase family. It depends on Fe cation as a cofactor.

Its function is as follows. Mediates electron transfer from NADH to oxygen, reducing it to water. This modular protein has 3 redox cofactors, in other organisms the same activity requires 2 or 3 proteins. This chain is Putative diflavin flavoprotein A 3 (dfa3), found in Nostoc sp. (strain PCC 7120 / SAG 25.82 / UTEX 2576).